The primary structure comprises 117 residues: Large ribosomal subunit protein uL18 (117 aa).

Belongs to the universal ribosomal protein uL18 family. As to quaternary structure, part of the 50S ribosomal subunit; part of the 5S rRNA/L5/L18/L25 subcomplex. Contacts the 5S and 23S rRNAs.

This is one of the proteins that bind and probably mediate the attachment of the 5S RNA into the large ribosomal subunit, where it forms part of the central protuberance. The sequence is that of Large ribosomal subunit protein uL18 from Francisella philomiragia subsp. philomiragia (strain ATCC 25017 / CCUG 19701 / FSC 153 / O#319-036).